A 393-amino-acid chain; its full sequence is NAD(P)H-quinone oxidoreductase subunit H, chloroplastic (393 aa).

The protein belongs to the complex I 49 kDa subunit family. NDH is composed of at least 16 different subunits, 5 of which are encoded in the nucleus.

Its subcellular location is the plastid. It localises to the chloroplast thylakoid membrane. The enzyme catalyses a plastoquinone + NADH + (n+1) H(+)(in) = a plastoquinol + NAD(+) + n H(+)(out). It carries out the reaction a plastoquinone + NADPH + (n+1) H(+)(in) = a plastoquinol + NADP(+) + n H(+)(out). In terms of biological role, NDH shuttles electrons from NAD(P)H:plastoquinone, via FMN and iron-sulfur (Fe-S) centers, to quinones in the photosynthetic chain and possibly in a chloroplast respiratory chain. The immediate electron acceptor for the enzyme in this species is believed to be plastoquinone. Couples the redox reaction to proton translocation, and thus conserves the redox energy in a proton gradient. This is NAD(P)H-quinone oxidoreductase subunit H, chloroplastic from Calycanthus floridus var. glaucus (Eastern sweetshrub).